Consider the following 141-residue polypeptide: Large ribosomal subunit protein uL11c (141 aa).

The protein belongs to the universal ribosomal protein uL11 family. In terms of assembly, part of the ribosomal stalk of the 50S ribosomal subunit. Interacts with L10 and the large rRNA to form the base of the stalk. L10 forms an elongated spine to which L12 dimers bind in a sequential fashion forming a multimeric L10(L12)X complex.

The protein localises to the plastid. The protein resides in the chloroplast. Forms part of the ribosomal stalk which helps the ribosome interact with GTP-bound translation factors. The sequence is that of Large ribosomal subunit protein uL11c from Pyropia yezoensis (Susabi-nori).